A 480-amino-acid chain; its full sequence is MPLMVVGTSSHVGKSTMVAAICRCLVRRGIRVAPFKSQNMSLNSFVTADGGEIGIAQAMQAWAARLSPTIDMNPVLLKPKGDCTSQVVLLGHPYKDVPIAEYYMETPYLLTEALAAYGRLVEEYGEVVVEGAGGAAEVNLYDRDIANTLLAEKLGIPLILVADIERGGVFAQVYGTIKLLPAPLRPLVKGIIINKFRGDPAIFANGIRIIEELTGVTVLGVVPHFSLPLPSEDSLSIGDKRHRDLPVRIAVIRLPHISNFTDFELLEQYAAVEYVPCGGSLAGYDCIIIPGTKNTIEDLAALREAGTDREILSAREQGIPVIGICGGYQMLGATLIDDGFESAAGEYPGLGLLDCSTRFATYSKNTMQVKRLAAPVSPILVSMGEVTGYEIHMGVTDPGTDQEAFSGDGRVTADGLVFGTYMHGLFLNPSAADALLAYLYAKKELTYSPIQTGAADPYDLLAGLFEEHVDMEAIVALLEK.

The GATase cobBQ-type domain maps to 246–431; the sequence is PVRIAVIRLP…MHGLFLNPSA (186 aa). Catalysis depends on Cys-325, which acts as the Nucleophile. His-423 is a catalytic residue.

Belongs to the CobB/CobQ family. CobQ subfamily.

The protein operates within cofactor biosynthesis; adenosylcobalamin biosynthesis. Its function is as follows. Catalyzes amidations at positions B, D, E, and G on adenosylcobyrinic A,C-diamide. NH(2) groups are provided by glutamine, and one molecule of ATP is hydrogenolyzed for each amidation. This Methanoregula boonei (strain DSM 21154 / JCM 14090 / 6A8) protein is Probable cobyric acid synthase.